The following is a 768-amino-acid chain: ATP-dependent zinc metalloprotease FtsH (768 aa).

The Cytoplasmic portion of the chain corresponds to 1–33 (MADRDKNDIRKRLEELRKDNNRRNNRQDNGNRS). Residues 34–54 (PFSGFLFFIFVILLFTFTLLF) traverse the membrane as a helical segment. The Periplasmic segment spans residues 55-139 (HRDIQTYFQE…KLNSLQPSGG (85 aa)). A helical membrane pass occupies residues 140 to 160 (GFFLLLLGQFLPMIIMIGLMV). Over 161-768 (YLAKKMVGGS…SNFKLPSFME (608 aa)) the chain is Cytoplasmic. Residue 238-245 (GRPGTGKT) coordinates ATP. His-461 contacts Zn(2+). Glu-462 is a catalytic residue. His-465 and Asp-536 together coordinate Zn(2+). The tract at residues 647–768 (EESIQKGSEG…SNFKLPSFME (122 aa)) is disordered. Over residues 669 to 698 (QENKTVEAEVHDSNLKSDTEKLAEAVREIT) the composition is skewed to basic and acidic residues. Residues 715-731 (KDSDDNEKNDDDNENSD) are compositionally biased toward acidic residues.

This sequence in the central section; belongs to the AAA ATPase family. It in the C-terminal section; belongs to the peptidase M41 family. Homohexamer. Zn(2+) serves as cofactor.

Its subcellular location is the cell inner membrane. Its function is as follows. Acts as a processive, ATP-dependent zinc metallopeptidase for both cytoplasmic and membrane proteins. Plays a role in the quality control of integral membrane proteins. This is ATP-dependent zinc metalloprotease FtsH from Leptotrichia buccalis (strain ATCC 14201 / DSM 1135 / JCM 12969 / NCTC 10249 / C-1013-b).